The primary structure comprises 827 residues: MTFCYPCRAFALLTRGFTSFMSGWPRIYYKLLNLPLSILVKSKSIPADPAPELGLDTSRPIMYVLPYNSKADLLTLRAQCLAHDLPDPLEPLEIDGTLLPRYVFIHGGPRVFTYYTPKEESIKLFHDYLDLHRSNPNLDVQMVPVSVMFGRAPGREKGEVNPPLRMLNGVQKFFAVLWLGRDSFVRFSPSVSLRRMADEHGTDKTIAQKLARVARMHFARQRLAAVGPRLPARQDLFNKLLASRAIAKAVEDEARSKKISHEKAQQNAIVLMEEIAANFSYEMIRLTDRILGFTWNRLYQGINVHNAERVRQLAHDGHELVYVPCHRSHMDYLLLSYVLYHQGLVPPHIAAGINLNFWPAGPIFRRLGAFFIRRTFKGNKLYSTVFREYLGELFSRGYSVEYFVEGGRSRTGRLLDPKTGTLSMTIQAMLRGGTRPITLIPIYIGYEHVMEVGTYAKELRGATKEKESLPQMLRGLSKLRNLGQGYVNFGEPMPLMTYLNQHVPDWRESIDPIEAVRPAWLTPTVNNIAADLMVRINNAGAANAMNLCCTALLASRQRSLTREQLTEQLNCYLDLMRNVPYSTDSTVPSASASELIDHALQMNKFEVEKDTIGDIIILPREQAVLMTYYRNNIAHMLVLPSLMAAIVTQHRHISRDVLMEHVNVLYPMLKAELFLRWDRDELPDVIDALANEMQRQGLITLQDDELHINPAHSRTLQLLAAGARETLQRYAITFWLLSANPSINRGTLEKESRTVAQRLSVLHGINAPEFFDKAVFSSLVLTLRDEGYISDSGDAEPAETMKVYQLLAELITSDVRLTIESATQGEG.

Residues 325 to 330 (CHRSHM) carry the HXXXXD motif motif.

This sequence belongs to the GPAT/DAPAT family.

The protein resides in the cell inner membrane. The enzyme catalyses sn-glycerol 3-phosphate + an acyl-CoA = a 1-acyl-sn-glycero-3-phosphate + CoA. Its pathway is phospholipid metabolism; CDP-diacylglycerol biosynthesis; CDP-diacylglycerol from sn-glycerol 3-phosphate: step 1/3. The chain is Glycerol-3-phosphate acyltransferase from Escherichia coli (strain SMS-3-5 / SECEC).